We begin with the raw amino-acid sequence, 367 residues long: tRNA 2-selenouridine synthase (367 aa).

Residues Phe-15–Glu-138 form the Rhodanese domain. Residue Cys-98 is the S-selanylcysteine intermediate of the active site.

This sequence belongs to the SelU family. In terms of assembly, monomer.

It carries out the reaction 5-methylaminomethyl-2-thiouridine(34) in tRNA + selenophosphate + (2E)-geranyl diphosphate + H2O + H(+) = 5-methylaminomethyl-2-selenouridine(34) in tRNA + (2E)-thiogeraniol + phosphate + diphosphate. The enzyme catalyses 5-methylaminomethyl-2-thiouridine(34) in tRNA + (2E)-geranyl diphosphate = 5-methylaminomethyl-S-(2E)-geranyl-thiouridine(34) in tRNA + diphosphate. It catalyses the reaction 5-methylaminomethyl-S-(2E)-geranyl-thiouridine(34) in tRNA + selenophosphate + H(+) = 5-methylaminomethyl-2-(Se-phospho)selenouridine(34) in tRNA + (2E)-thiogeraniol. The catalysed reaction is 5-methylaminomethyl-2-(Se-phospho)selenouridine(34) in tRNA + H2O = 5-methylaminomethyl-2-selenouridine(34) in tRNA + phosphate. In terms of biological role, involved in the post-transcriptional modification of the uridine at the wobble position (U34) of tRNA(Lys), tRNA(Glu) and tRNA(Gln). Catalyzes the conversion of 2-thiouridine (S2U-RNA) to 2-selenouridine (Se2U-RNA). Acts in a two-step process involving geranylation of 2-thiouridine (S2U) to S-geranyl-2-thiouridine (geS2U) and subsequent selenation of the latter derivative to 2-selenouridine (Se2U) in the tRNA chain. The sequence is that of tRNA 2-selenouridine synthase from Shewanella denitrificans (strain OS217 / ATCC BAA-1090 / DSM 15013).